The following is a 546-amino-acid chain: Chaperonin GroEL (546 aa).

ATP is bound by residues Thr30–Pro33, Lys51, Asp87–Thr91, Gly415, and Asp495.

It belongs to the chaperonin (HSP60) family. In terms of assembly, forms a cylinder of 14 subunits composed of two heptameric rings stacked back-to-back. Interacts with the co-chaperonin GroES.

The protein resides in the cytoplasm. It carries out the reaction ATP + H2O + a folded polypeptide = ADP + phosphate + an unfolded polypeptide.. Its function is as follows. Together with its co-chaperonin GroES, plays an essential role in assisting protein folding. The GroEL-GroES system forms a nano-cage that allows encapsulation of the non-native substrate proteins and provides a physical environment optimized to promote and accelerate protein folding. The protein is Chaperonin GroEL of Brucella suis (strain ATCC 23445 / NCTC 10510).